Here is a 142-residue protein sequence, read N- to C-terminus: Large ribosomal subunit protein uL13 (142 aa).

Belongs to the universal ribosomal protein uL13 family. As to quaternary structure, part of the 50S ribosomal subunit.

This protein is one of the early assembly proteins of the 50S ribosomal subunit, although it is not seen to bind rRNA by itself. It is important during the early stages of 50S assembly. The polypeptide is Large ribosomal subunit protein uL13 (Hamiltonella defensa subsp. Acyrthosiphon pisum (strain 5AT)).